Consider the following 63-residue polypeptide: uncharacterized protein (63 aa).

This is an uncharacterized protein from Vaccinia virus (strain Western Reserve) (VACV).